The following is a 242-amino-acid chain: Probable transcriptional regulatory protein Dred_1658 (242 aa).

This sequence belongs to the TACO1 family.

The protein localises to the cytoplasm. The protein is Probable transcriptional regulatory protein Dred_1658 of Desulforamulus reducens (strain ATCC BAA-1160 / DSM 100696 / MI-1) (Desulfotomaculum reducens).